Here is a 605-residue protein sequence, read N- to C-terminus: MALRKGGLALALLLLSWVALGPRSLEGAEPGTPGEAEGPACPATCACSYDDEVNELSVFCSSRNLTRLPDGIPGGTQALWLDSNNLSSIPPAAFRNLSSLAFLNLQGGQLGSLEPQALLGLENLCHLHLERNQLRSLAVGTFAYTPALALLGLSNNRLSRLEDGLFEGLGNLWDLNLGWNSLAVLPDAAFRGLGGLRELVLAGNRLAYLQPALFSGLAELRELDLSRNALRAIKANVFAQLPRLQKLYLDRNLIAAVAPGAFLGLKALRWLDLSHNRVAGLLEDTFPGLLGLRVLRLSHNAIASLRPRTFEDLHFLEELQLGHNRIRQLAERSFEGLGQLEVLTLDHNQLQEVKVGAFLGLTNVAVMNLSGNCLRNLPEQVFRGLGKLHSLHLEGSCLGRIRPHTFAGLSGLRRLFLKDNGLVGIEEQSLWGLAELLELDLTSNQLTHLPHQLFQGLGKLEYLLLSHNRLAELPADALGPLQRAFWLDVSHNRLEALPGSLLASLGRLRYLNLRNNSLRTFTPQPPGLERLWLEGNPWDCSCPLKALRDFALQNPSAVPRFVQAICEGDDCQPPVYTYNNITCASPPEVAGLDLRDLGEAHFAPC.

The signal sequence occupies residues 1–27; sequence MALRKGGLALALLLLSWVALGPRSLEG. Residues 32–74 enclose the LRRNT domain; sequence TPGEAEGPACPATCACSYDDEVNELSVFCSSRNLTRLPDGIPG. 2 disulfide bridges follow: Cys41–Cys47 and Cys45–Cys60. Residues Asn64, Asn85, and Asn96 are each glycosylated (N-linked (GlcNAc...) asparagine). LRR repeat units lie at residues 75–96, 99–120, 123–144, 147–168, 171–192, 195–216, 219–240, 243–264, 267–288, 291–312, 315–336, 339–360, 363–384, 387–408, 411–432, 435–456, 459–480, 483–504, and 507–528; these read GTQA…AFRN, SLAF…ALLG, NLCH…TFAY, ALAL…LFEG, NLWD…AFRG, GLRE…LFSG, ELRE…VFAQ, RLQK…AFLG, ALRW…TFPG, GLRV…TFED, FLEE…SFEG, QLEV…AFLG, NVAV…VFRG, KLHS…TFAG, GLRR…SLWG, ELLE…LFQG, KLEY…ALGP, RAFW…LLAS, and RLRY…PPGL. N-linked (GlcNAc...) asparagine glycosylation is present at Asn368. An N-linked (GlcNAc...) asparagine glycan is attached at Asn515. Residues 536–605 enclose the LRRCT domain; the sequence is NPWDCSCPLK…DLGEAHFAPC (70 aa). Disulfide bonds link Cys540/Cys583, Cys542/Cys605, and Cys566/Cys571. An N-linked (GlcNAc...) asparagine glycan is attached at Asn580.

In terms of assembly, forms a ternary complex with IGF1 and IGFBP3.

It localises to the secreted. The protein localises to the extracellular space. Its function is as follows. Involved in protein-protein interactions that result in protein complexes, receptor-ligand binding or cell adhesion. This Papio hamadryas (Hamadryas baboon) protein is Insulin-like growth factor-binding protein complex acid labile subunit (IGFALS).